The following is a 533-amino-acid chain: D-2-hydroxyglutarate dehydrogenase, mitochondrial (533 aa).

The N-terminal 55 residues, 1–55 (MGLFQKCSRLSLRSSYMWSVCPQYSIAVTARETPDRALIVHWTQHRDVHNSRRLG), are a transit peptide targeting the mitochondrion. One can recognise an FAD-binding PCMH-type domain in the interval 107–286 (VQGSSDVLLR…TAVSILCPRK (180 aa)). (R)-2-hydroxyglutarate-binding residues include Arg-397, Thr-401, and Lys-412. Residue Arg-397 coordinates (R)-lactate. Residues Arg-397, Thr-401, and Lys-412 each contribute to the (R)-malate site. Zn(2+)-binding residues include His-445 and His-452. Asn-454 serves as a coordination point for (R)-2-hydroxyglutarate. A Zn(2+)-binding site is contributed by Glu-486. Residue His-487 participates in (R)-2-hydroxyglutarate binding. His-487 lines the (R)-lactate pocket. His-487 contacts (R)-malate.

It belongs to the FAD-binding oxidoreductase/transferase type 4 family. The cofactor is FAD.

The protein resides in the mitochondrion. It carries out the reaction (R)-2-hydroxyglutarate + A = 2-oxoglutarate + AH2. It catalyses the reaction (R)-malate + A = oxaloacetate + AH2. Its function is as follows. Catalyzes the oxidation of D-2-hydroxyglutarate (D-2-HG) to alpha-ketoglutarate. Also catalyzes the oxidation of other D-2-hydroxyacids, such as D-malate (D-MAL) and D-lactate (D-LAC). Exhibits high activities towards D-2-HG and D-MAL but a very weak activity towards D-LAC. The chain is D-2-hydroxyglutarate dehydrogenase, mitochondrial (d2hgdh) from Danio rerio (Zebrafish).